The chain runs to 71 residues: MPAVKVKENEPFDVALRRFKRSCEKAGVLAEVRSREFYEKPTSERKRKAAAAVKRHAKKVQREQRRAVRLY.

A compositionally biased stretch (basic residues) spans 50-59; it reads AAAVKRHAKK. A disordered region spans residues 50–71; that stretch reads AAAVKRHAKKVQREQRRAVRLY. Positions 60-71 are enriched in basic and acidic residues; sequence VQREQRRAVRLY.

This sequence belongs to the bacterial ribosomal protein bS21 family.

This Pseudomonas fluorescens (strain ATCC BAA-477 / NRRL B-23932 / Pf-5) protein is Small ribosomal subunit protein bS21.